Here is an 804-residue protein sequence, read N- to C-terminus: Endoplasmin (804 aa).

A signal peptide spans 1–21 (MRALWVLGLCCVLLTFGSVRA). Positions 42–44 (SRT) match the SRT pseudosubstrate motif motif. Asn62 carries an N-linked (GlcNAc...) asparagine glycan. Ser64 carries the post-translational modification Phosphoserine. Asn107 carries an N-linked (GlcNAc...) asparagine glycan. Positions 107, 149, and 162 each coordinate ATP. Lys168 carries the N6-(2-hydroxyisobutyryl)lysine modification. The residue at position 172 (Ser172) is a Phosphoserine. Phe199 contributes to the ATP binding site. The N-linked (GlcNAc...) asparagine glycan is linked to Asn217. A disordered region spans residues 288 to 323 (TVEEPAEEEEAAKEDKEESDDEAAVEEEEDEKKPKT). The span at 289-317 (VEEPAEEEEAAKEDKEESDDEAAVEEEED) shows a compositional bias: acidic residues. A phosphoserine mark is found at Ser306 and Ser403. At Lys404 the chain carries N6-succinyllysine. An N-linked (GlcNAc...) asparagine glycan is attached at Asn445. Phosphoserine is present on Ser447. Lys479 bears the N6-acetyllysine mark. Residues Asn481 and Asn502 are each glycosylated (N-linked (GlcNAc...) asparagine). Lys633 bears the N6-succinyllysine mark. Residues 750–804 (DPDAKVEEEPEEEPEETTEDTAEDTEQDEEEEMDAGTDEEEQETAEKSTAEKDEL) form a disordered region. The span at 757 to 792 (EEPEEEPEETTEDTAEDTEQDEEEEMDAGTDEEEQE) shows a compositional bias: acidic residues. Phosphothreonine is present on Thr786. A compositionally biased stretch (basic and acidic residues) spans 793–804 (TAEKSTAEKDEL). The Prevents secretion from ER motif lies at 801–804 (KDEL).

Belongs to the heat shock protein 90 family. As to quaternary structure, homodimer; disulfide-linked. Component of an EIF2 complex at least composed of CELF1/CUGBP1, CALR, CALR3, EIF2S1, EIF2S2, HSP90B1 and HSPA5. Part of a large chaperone multiprotein complex comprising DNAJB11, HSP90B1, HSPA5, HYOU, PDIA2, PDIA4, PDIA6, PPIB, SDF2L1, UGGT1 and very small amounts of ERP29, but not, or at very low levels, CALR nor CANX. Interacts with AIMP1; regulates its retention in the endoplasmic reticulum. Hyperglycosylated form interacts with OS9; promoting its degradation by the endoplasmic reticulum associated degradation (ERAD). Interacts with CNPY3. This interaction is disrupted in the presence of ATP. Interacts with TLR4 and TLR9, but not with TLR3. Interacts with MZB1 in a calcium-dependent manner. Interacts with METTL23. Interacts with IL1B; the interaction facilitates cargo translocation into the ERGIC. Interacts with EIF2AK3. In terms of processing, phosphorylated by CK2. N-glycosylated cotranslationally at Asn-217 by STT3A-containing OST-A complex: this glycosylation is constitutive. In response to various stress, 5 additional facultative sites (Asn-62, Asn-107, Asn-445, Asn-481 and Asn-502) can be glycosylated post-translationally by STT3B-containing OST-B complex, leading to a hyperglycosylated form that is degraded by the ER-associated degradation (ERAD) pathway. In normal conditions, the OST-A complex together with CCDC134 prevent glycosylation at facultative sites during protein folding, thereby preventing hyperglycosylation. Mechanistically, nascent HSP90B1 is tethered during translation to a specialized CCDC134-containing translocon that forms a microenvironment for its folding, in which STT3A associates with the SRT pseudosubstrate motif, and prevents access to facultative glycosylation sites until folding is completed, rendering its facultative sites inaccessible to the OST-B complex.

It localises to the endoplasmic reticulum lumen. It is found in the sarcoplasmic reticulum lumen. The protein resides in the melanosome. It catalyses the reaction ATP + H2O = ADP + phosphate + H(+). ATP-dependent chaperone involved in the processing of proteins in the endoplasmic reticulum, regulating their transport. Together with MESD, acts as a modulator of the Wnt pathway by promoting the folding of LRP6, a coreceptor of the canonical Wnt pathway. When associated with CNPY3, required for proper folding of Toll-like receptors. Promotes folding and trafficking of TLR4 to the cell surface. May participate in the unfolding of cytosolic leaderless cargos (lacking the secretion signal sequence) such as the interleukin 1/IL-1 to facilitate their translocation into the ERGIC (endoplasmic reticulum-Golgi intermediate compartment) and secretion; the translocation process is mediated by the cargo receptor TMED10. The polypeptide is Endoplasmin (HSP90B1) (Bos taurus (Bovine)).